The following is a 452-amino-acid chain: Probable 1,4-beta-D-glucan cellobiohydrolase A (452 aa).

An N-terminal signal peptide occupies residues 1–17; the sequence is MHQRALLFSALAVAANA. N-linked (GlcNAc...) asparagine glycosylation is present at N81. E226 acts as the Nucleophile in catalysis. E231 acts as the Proton donor in catalysis. An N-linked (GlcNAc...) asparagine glycan is attached at N284. Residues 405–431 form a disordered region; that stretch reads ADPSKPGVARGTCEHGAGDPENVESQH.

The protein belongs to the glycosyl hydrolase 7 (cellulase C) family.

The protein resides in the secreted. The catalysed reaction is Hydrolysis of (1-&gt;4)-beta-D-glucosidic linkages in cellulose and cellotetraose, releasing cellobiose from the non-reducing ends of the chains.. In terms of biological role, the biological conversion of cellulose to glucose generally requires three types of hydrolytic enzymes: (1) Endoglucanases which cut internal beta-1,4-glucosidic bonds; (2) Exocellobiohydrolases that cut the disaccharide cellobiose from the non-reducing end of the cellulose polymer chain; (3) Beta-1,4-glucosidases which hydrolyze the cellobiose and other short cello-oligosaccharides to glucose. This Aspergillus fumigatus (strain CBS 144.89 / FGSC A1163 / CEA10) (Neosartorya fumigata) protein is Probable 1,4-beta-D-glucan cellobiohydrolase A (cbhA).